We begin with the raw amino-acid sequence, 100 residues long: MAPSQKALLVLVLSMLLTASDSWARRIDCKVFVFAPICRGVAAKRGGDSLSVGGSAELDDALTDPFLRSEEPREWRELTRLSRVLQTFLSHPTGETEQHD.

A signal peptide spans 1–24 (MAPSQKALLVLVLSMLLTASDSWA). Cysteines 29 and 38 form a disulfide. The propeptide occupies 44–100 (KRGGDSLSVGGSAELDDALTDPFLRSEEPREWRELTRLSRVLQTFLSHPTGETEQHD).

Belongs to the elevenin family. As to quaternary structure, monomer. In terms of tissue distribution, expressed by the venom duct.

Its subcellular location is the secreted. Functionally, may mimic the function of prey elevenin neuropeptide. In vivo, intracranial injection in mice induces hyperactivity (tested at 5 and 10 nM). The sequence is that of Elevenin-Vc1 from Conus victoriae (Queen Victoria cone).